A 348-amino-acid chain; its full sequence is Hereditary hemochromatosis protein homolog (348 aa).

The signal sequence occupies residues M1–G22. The segment at R23–E114 is alpha-1. Residues R23–V306 are Extracellular-facing. Residues N110, N130, and N234 are each glycosylated (N-linked (GlcNAc...) asparagine). Positions S115–Q205 are alpha-2. Cystine bridges form between C124–C187 and C225–C282. Residues V206–W297 are alpha-3. The Ig-like C1-type domain occupies P207–T296. Residues E298 to V306 are connecting peptide. A helical transmembrane segment spans residues T307–R330. Residues K331–E348 are Cytoplasmic-facing.

Belongs to the MHC class I family. Binds TFR through the extracellular domain in a pH-dependent manner.

It is found in the cell membrane. Its function is as follows. Binds to transferrin receptor (TFR) and reduces its affinity for iron-loaded transferrin. The chain is Hereditary hemochromatosis protein homolog (HFE) from Ceratotherium simum (White rhinoceros).